The sequence spans 346 residues: Quinolinate synthase (346 aa).

Residues His47 and Ser68 each contribute to the iminosuccinate site. Cys113 is a [4Fe-4S] cluster binding site. Iminosuccinate-binding positions include Tyr139 to Asn141 and Ser156. Cys200 serves as a coordination point for [4Fe-4S] cluster. Residues His226–Glu228 and Thr243 each bind iminosuccinate. Cys297 is a binding site for [4Fe-4S] cluster.

This sequence belongs to the quinolinate synthase family. Type 1 subfamily. [4Fe-4S] cluster is required as a cofactor.

Its subcellular location is the cytoplasm. It catalyses the reaction iminosuccinate + dihydroxyacetone phosphate = quinolinate + phosphate + 2 H2O + H(+). It participates in cofactor biosynthesis; NAD(+) biosynthesis; quinolinate from iminoaspartate: step 1/1. In terms of biological role, catalyzes the condensation of iminoaspartate with dihydroxyacetone phosphate to form quinolinate. This is Quinolinate synthase from Pseudoalteromonas translucida (strain TAC 125).